Here is a 175-residue protein sequence, read N- to C-terminus: Sec-independent protein translocase protein TatB (175 aa).

Residues M1–G21 form a helical membrane-spanning segment. Disordered regions lie at residues K100–E132 and Q155–S175. A compositionally biased stretch (low complexity) spans E111–E132.

Belongs to the TatB family. As to quaternary structure, the Tat system comprises two distinct complexes: a TatABC complex, containing multiple copies of TatA, TatB and TatC subunits, and a separate TatA complex, containing only TatA subunits. Substrates initially bind to the TatABC complex, which probably triggers association of the separate TatA complex to form the active translocon.

Its subcellular location is the cell inner membrane. Functionally, part of the twin-arginine translocation (Tat) system that transports large folded proteins containing a characteristic twin-arginine motif in their signal peptide across membranes. Together with TatC, TatB is part of a receptor directly interacting with Tat signal peptides. TatB may form an oligomeric binding site that transiently accommodates folded Tat precursor proteins before their translocation. The chain is Sec-independent protein translocase protein TatB from Bradyrhizobium diazoefficiens (strain JCM 10833 / BCRC 13528 / IAM 13628 / NBRC 14792 / USDA 110).